The chain runs to 706 residues: Ribosomal RNA large subunit methyltransferase K/L (706 aa).

The THUMP domain maps to 43-154 (LMYQSLLWSR…RDMASVALDL (112 aa)).

This sequence belongs to the methyltransferase superfamily. RlmKL family.

The protein localises to the cytoplasm. The enzyme catalyses guanosine(2445) in 23S rRNA + S-adenosyl-L-methionine = N(2)-methylguanosine(2445) in 23S rRNA + S-adenosyl-L-homocysteine + H(+). The catalysed reaction is guanosine(2069) in 23S rRNA + S-adenosyl-L-methionine = N(2)-methylguanosine(2069) in 23S rRNA + S-adenosyl-L-homocysteine + H(+). Functionally, specifically methylates the guanine in position 2445 (m2G2445) and the guanine in position 2069 (m7G2069) of 23S rRNA. This chain is Ribosomal RNA large subunit methyltransferase K/L, found in Yersinia pestis (strain Pestoides F).